We begin with the raw amino-acid sequence, 389 residues long: Putative F-box/kelch-repeat protein At4g35120 (389 aa).

The F-box domain occupies 24 to 70 (SMSISSLPDEIVLSFLALISKSYYRSLSLVSKSFYSLLSSTEIYAAR). Kelch repeat units lie at residues 128-174 (EIYK…FLDG), 176-225 (IYVI…AVSG), and 227-273 (RLYV…MKPI).

The sequence is that of Putative F-box/kelch-repeat protein At4g35120 from Arabidopsis thaliana (Mouse-ear cress).